Consider the following 404-residue polypeptide: Ubiquitin-like modifier-activating enzyme 5 (404 aa).

Ser-45 carries the phosphoserine modification. ATP is bound by residues Gly-83, Asp-104, Lys-127, Asn-150, and Asn-184. Zn(2+)-binding residues include Cys-226 and Cys-229. Cys-250 (glycyl thioester intermediate) is an active-site residue. Cys-303 and Cys-308 together coordinate Zn(2+). Residues 334–346 (IIHEDNEWGIELV) carry the UFM1-interacting sequence (UIS) motif. A linker region spans residues 347 to 377 (SEVSEEELKNFSGPVPDLPEGITVAYTIPKK). 2 positions are modified to phosphoserine: Ser-358 and Ser-393. The UFC1-binding sequence (UFC) signature appears at 389–404 (DSGESLEDLMAKMKNM).

It belongs to the ubiquitin-activating E1 family. UBA5 subfamily. As to quaternary structure, homodimer; homodimerization is required for UFM1 activation. Interacts (via UIS motif) with UFM1; binds UFM1 via a trans-binding mechanism in which UFM1 interacts with distinct sites in both subunits of the UBA5 homodimer. Interacts (via C-terminus) with UFC1. Interacts (via UIS motif) with GABARAPL2 and, with lower affinity, with GABARAP and GABARAPL1. Widely expressed.

Its subcellular location is the cytoplasm. The protein resides in the nucleus. It is found in the endoplasmic reticulum membrane. The protein localises to the golgi apparatus. In terms of biological role, E1-like enzyme which specifically catalyzes the first step in ufmylation. Activates UFM1 by first adenylating its C-terminal glycine residue with ATP, and thereafter linking this residue to the side chain of a cysteine residue in E1, yielding a UFM1-E1 thioester and free AMP. Activates UFM1 via a trans-binding mechanism, in which UFM1 interacts with distinct sites in both subunits of the UBA5 homodimer. Trans-binding also promotes stabilization of the UBA5 homodimer, and enhances ATP-binding. Transfer of UFM1 from UBA5 to the E2-like enzyme UFC1 also takes place using a trans mechanism. Ufmylation plays a key role in various processes, such as ribosome recycling, response to DNA damage, interferon response or reticulophagy (also called ER-phagy). Ufmylation is essential for erythroid differentiation of both megakaryocytes and erythrocytes. The polypeptide is Ubiquitin-like modifier-activating enzyme 5 (Homo sapiens (Human)).